Here is a 308-residue protein sequence, read N- to C-terminus: 4-hydroxy-tetrahydrodipicolinate synthase (308 aa).

Threonine 56 contacts pyruvate. Tyrosine 144 serves as the catalytic Proton donor/acceptor. Lysine 172 functions as the Schiff-base intermediate with substrate in the catalytic mechanism. Pyruvate is bound at residue valine 212.

Belongs to the DapA family. In terms of assembly, homotetramer; dimer of dimers.

The protein resides in the cytoplasm. It catalyses the reaction L-aspartate 4-semialdehyde + pyruvate = (2S,4S)-4-hydroxy-2,3,4,5-tetrahydrodipicolinate + H2O + H(+). The protein operates within amino-acid biosynthesis; L-lysine biosynthesis via DAP pathway; (S)-tetrahydrodipicolinate from L-aspartate: step 3/4. Catalyzes the condensation of (S)-aspartate-beta-semialdehyde [(S)-ASA] and pyruvate to 4-hydroxy-tetrahydrodipicolinate (HTPA). This Kineococcus radiotolerans (strain ATCC BAA-149 / DSM 14245 / SRS30216) protein is 4-hydroxy-tetrahydrodipicolinate synthase.